The chain runs to 167 residues: Leptin (167 aa).

The signal sequence occupies residues 1-21; it reads MHCVPLFCFLWFCHHLYYSQA. C117 and C167 are joined by a disulfide.

It belongs to the leptin family.

The protein resides in the secreted. In terms of biological role, key player in the regulation of energy balance and body weight control. Once released into the circulation, has central and peripheral effects by binding LEPR, found in many tissues, which results in the activation of several major signaling pathways. In the hypothalamus, acts as an appetite-regulating factor that induces a decrease in food intake and an increase in energy consumption by inducing anorexinogenic factors and suppressing orexigenic neuropeptides, also regulates bone mass and secretion of hypothalamo-pituitary-adrenal hormones. In the periphery, increases basal metabolism, influences reproductive function, regulates pancreatic beta-cell function and insulin secretion, is pro-angiogenic for endothelial cell and affects innate and adaptive immunity. In the arcuate nucleus of the hypothalamus, activates by depolarization POMC neurons inducing FOS and SOCS3 expression to release anorexigenic peptides and inhibits by hyperpolarization NPY neurons inducing SOCS3 with a consequent reduction on release of orexigenic peptides. In addition to its known satiety inducing effect, has a modulatory role in nutrient absorption. In the intestine, reduces glucose absorption by enterocytes by activating PKC and leading to a sequential activation of p38, PI3K and ERK signaling pathways which exerts an inhibitory effect on glucose absorption. Acts as a growth factor on certain tissues, through the activation of different signaling pathways increases expression of genes involved in cell cycle regulation such as CCND1, via JAK2-STAT3 pathway, or VEGFA, via MAPK1/3 and PI3K-AKT1 pathways. May also play an apoptotic role via JAK2-STAT3 pathway and up-regulation of BIRC5 expression. Pro-angiogenic, has mitogenic activity on vascular endothelial cells and plays a role in matrix remodeling by regulating the expression of matrix metalloproteinases (MMPs) and tissue inhibitors of metalloproteinases (TIMPs). In innate immunity, modulates the activity and function of neutrophils by increasing chemotaxis and the secretion of oxygen radicals. Increases phagocytosis by macrophages and enhances secretion of pro-inflammatory mediators. Increases cytotoxic ability of NK cells. Plays a pro-inflammatory role, in synergy with IL1B, by inducing NOS2 which promotes the production of IL6, IL8 and Prostaglandin E2, through a signaling pathway that involves JAK2, PI3K, MAP2K1/MEK1 and MAPK14/p38. In adaptive immunity, promotes the switch of memory T-cells towards T helper-1 cell immune responses. Increases CD4(+)CD25(-) T-cell proliferation and reduces autophagy during TCR (T-cell receptor) stimulation, through MTOR signaling pathway activation and BCL2 up-regulation. This chain is Leptin (LEP), found in Sminthopsis crassicaudata (Fat-tailed dunnart).